We begin with the raw amino-acid sequence, 155 residues long: MADLSALKEIATTAEPAAPVHVKKVDAQGRSYATGKRKDAVARVWIKAGSGKITINGKPFSDYFARPVLQMILQQPVVAAARDGQFDIDATVAGGGLSGQAGAVRHGISKALTYFEPGLRPVLKRGGFLTRDSRVVERKKYGRAKARRSFQFSKR.

Belongs to the universal ribosomal protein uS9 family.

This is Small ribosomal subunit protein uS9 from Rhizobium meliloti (strain 1021) (Ensifer meliloti).